The sequence spans 94 residues: Small ribosomal subunit protein bS16c (94 aa).

Belongs to the bacterial ribosomal protein bS16 family.

It localises to the plastid. The protein resides in the chloroplast. The protein is Small ribosomal subunit protein bS16c of Phalaenopsis aphrodite subsp. formosana (Moth orchid).